A 181-amino-acid chain; its full sequence is Probable mitochondrial import inner membrane translocase subunit tim-17B.1 (181 aa).

The next 3 helical transmembrane spans lie at 17–37 (IGSA…FGGY), 61–81 (GVQF…LVAI), and 109–129 (VMAG…GVGL). Residues 137-181 (AMMDPTQPPPEALDDPRSLGQKSQAEPGLDQTRPFGIPTGLPNLS) are disordered.

Belongs to the Tim17/Tim22/Tim23 family.

Its subcellular location is the mitochondrion inner membrane. In terms of biological role, essential component of the TIM23 complex, a complex that mediates the translocation of transit peptide-containing proteins across the mitochondrial inner membrane. In Caenorhabditis elegans, this protein is Probable mitochondrial import inner membrane translocase subunit tim-17B.1.